A 544-amino-acid chain; its full sequence is MAKDIKFSEDARSLMLQGVDKLANAVKITLGPKGRNVVLEKKFGSPLITNDGVTIAKEIELENPYENMGAKLVAEVASKTNEIAGDGTTTATVLAQAIIREGLKNVTAGANPVGIRKGIDKAVAAALTELHTISRPVSNKDEIAQVAAISAADDEVGQLIAEAMERVGNDGVITIEESKGFTTELDVVEGMQFDRGYASHYMVTDTDKMEAVLDNPYILITDKKITNIQEVLPLLEQVVQQGRPLLIIAEDVEGEALATLVVNKLRGTFNAVAVKAPGFGDRRKAMLEDIAILTGGQVITEELGLDLKSADISSLGRAAKVVVTKDNTTIVEGVGGADAIEARIGQIRAQLAETTSEFDKEKLQERLAKLAGGVAVIKVGAATETELKERKLRIEDALNSTRAAVEEGIVSGGGTALLNVYAAVEKVSESEEGDVATGVKIVLRALEEPVRQIANNAGLEGSIIVDRLKREEIGIGFNAATGEWVNMMEAGVVDPAKVTRSALQNAASVAALFLTTEAVVADIPEPAGAGMPDMSGMGGMPGMM.

ATP-binding positions include 29–32, 86–90, G413, 478–480, and D494; these read TLGP, DGTTT, and NAA.

It belongs to the chaperonin (HSP60) family. As to quaternary structure, forms a cylinder of 14 subunits composed of two heptameric rings stacked back-to-back. Interacts with the co-chaperonin GroES.

The protein localises to the cytoplasm. It carries out the reaction ATP + H2O + a folded polypeptide = ADP + phosphate + an unfolded polypeptide.. Its function is as follows. Together with its co-chaperonin GroES, plays an essential role in assisting protein folding. The GroEL-GroES system forms a nano-cage that allows encapsulation of the non-native substrate proteins and provides a physical environment optimized to promote and accelerate protein folding. The protein is Chaperonin GroEL of Lysinibacillus sphaericus (strain C3-41).